We begin with the raw amino-acid sequence, 366 residues long: Phospho-N-acetylmuramoyl-pentapeptide-transferase (366 aa).

Helical transmembrane passes span 27-47, 71-91, 93-113, 138-158, 174-194, 205-225, 245-265, 268-288, 297-317, and 343-363; these read AALF…IASL, TPTM…LLWA, LSSI…AIGF, FVIA…AGAA, LMLN…VGAG, GLAI…AYLA, LAVI…FNAP, AIFM…TVAV, VIIG…VFWF, and QVVI…LSTL.

It belongs to the glycosyltransferase 4 family. MraY subfamily. Mg(2+) serves as cofactor.

Its subcellular location is the cell inner membrane. It catalyses the reaction UDP-N-acetyl-alpha-D-muramoyl-L-alanyl-gamma-D-glutamyl-meso-2,6-diaminopimeloyl-D-alanyl-D-alanine + di-trans,octa-cis-undecaprenyl phosphate = di-trans,octa-cis-undecaprenyl diphospho-N-acetyl-alpha-D-muramoyl-L-alanyl-D-glutamyl-meso-2,6-diaminopimeloyl-D-alanyl-D-alanine + UMP. Its pathway is cell wall biogenesis; peptidoglycan biosynthesis. Catalyzes the initial step of the lipid cycle reactions in the biosynthesis of the cell wall peptidoglycan: transfers peptidoglycan precursor phospho-MurNAc-pentapeptide from UDP-MurNAc-pentapeptide onto the lipid carrier undecaprenyl phosphate, yielding undecaprenyl-pyrophosphoryl-MurNAc-pentapeptide, known as lipid I. This chain is Phospho-N-acetylmuramoyl-pentapeptide-transferase, found in Sinorhizobium medicae (strain WSM419) (Ensifer medicae).